Consider the following 440-residue polypeptide: ATP-dependent protease ATPase subunit HslU (440 aa).

ATP contacts are provided by residues Ile-18, 60-65, Asp-253, Glu-318, and Arg-390; that span reads GVGKTE.

Belongs to the ClpX chaperone family. HslU subfamily. A double ring-shaped homohexamer of HslV is capped on each side by a ring-shaped HslU homohexamer. The assembly of the HslU/HslV complex is dependent on binding of ATP.

It is found in the cytoplasm. In terms of biological role, ATPase subunit of a proteasome-like degradation complex; this subunit has chaperone activity. The binding of ATP and its subsequent hydrolysis by HslU are essential for unfolding of protein substrates subsequently hydrolyzed by HslV. HslU recognizes the N-terminal part of its protein substrates and unfolds these before they are guided to HslV for hydrolysis. In Shewanella oneidensis (strain ATCC 700550 / JCM 31522 / CIP 106686 / LMG 19005 / NCIMB 14063 / MR-1), this protein is ATP-dependent protease ATPase subunit HslU.